The sequence spans 498 residues: ATP synthase subunit beta, chloroplastic (498 aa).

An ATP-binding site is contributed by 172-179; it reads GGAGVGKT.

Belongs to the ATPase alpha/beta chains family. As to quaternary structure, F-type ATPases have 2 components, CF(1) - the catalytic core - and CF(0) - the membrane proton channel. CF(1) has five subunits: alpha(3), beta(3), gamma(1), delta(1), epsilon(1). CF(0) has four main subunits: a(1), b(1), b'(1) and c(9-12).

The protein resides in the plastid. It localises to the chloroplast thylakoid membrane. It carries out the reaction ATP + H2O + 4 H(+)(in) = ADP + phosphate + 5 H(+)(out). Its function is as follows. Produces ATP from ADP in the presence of a proton gradient across the membrane. The catalytic sites are hosted primarily by the beta subunits. This is ATP synthase subunit beta, chloroplastic from Oenothera biennis (German evening primrose).